A 116-amino-acid chain; its full sequence is Putative pterin-4-alpha-carbinolamine dehydratase (116 aa).

The protein belongs to the pterin-4-alpha-carbinolamine dehydratase family.

It carries out the reaction (4aS,6R)-4a-hydroxy-L-erythro-5,6,7,8-tetrahydrobiopterin = (6R)-L-erythro-6,7-dihydrobiopterin + H2O. This is Putative pterin-4-alpha-carbinolamine dehydratase from Stenotrophomonas maltophilia (strain K279a).